A 480-amino-acid chain; its full sequence is Alpha-glucosidase (480 aa).

NAD(+) is bound at residue 4 to 70 (VKIGIIGAGS…ADLKFEKTMN (67 aa)). Substrate is bound by residues Asp119 and Asn153. Cys174 contributes to the Mn(2+) binding site. Catalysis depends on His175, which acts as the Proton donor. A Mn(2+)-binding site is contributed by His203. The active-site Proton acceptor is Asp260.

It belongs to the glycosyl hydrolase 4 family. Homodimer. NAD(+) is required as a cofactor. It depends on Mn(2+) as a cofactor. Requires Co(2+) as cofactor. The cofactor is Ni(2+).

The enzyme catalyses Hydrolysis of terminal, non-reducing (1-&gt;4)-linked alpha-D-glucose residues with release of alpha-D-glucose.. Its activity is regulated as follows. Inhibited by Hg(2+) ion and EDTA. Functionally, alpha-glycosidase with a very broad specificity. Hydrolyzes maltose and other small maltooligosaccharides but is inactive against the polymeric substrate starch. AglA is not specific with respect to the configuration at the C-4 position of its substrates because glycosidic derivatives of D-galactose are also hydrolyzed. Does not cleave beta-glycosidic bonds. The sequence is that of Alpha-glucosidase (aglA) from Thermotoga maritima (strain ATCC 43589 / DSM 3109 / JCM 10099 / NBRC 100826 / MSB8).